The chain runs to 205 residues: tRNA (guanine-N(7)-)-methyltransferase (205 aa).

Positions 36, 61, 88, and 109 each coordinate S-adenosyl-L-methionine. Residue Asp-109 is part of the active site. Lys-113 provides a ligand contact to substrate. An interaction with RNA region spans residues 115-120 (RHEKRR). Substrate contacts are provided by residues Asp-145 and 183–186 (TGYE).

This sequence belongs to the class I-like SAM-binding methyltransferase superfamily. TrmB family.

It catalyses the reaction guanosine(46) in tRNA + S-adenosyl-L-methionine = N(7)-methylguanosine(46) in tRNA + S-adenosyl-L-homocysteine. Its pathway is tRNA modification; N(7)-methylguanine-tRNA biosynthesis. In terms of biological role, catalyzes the formation of N(7)-methylguanine at position 46 (m7G46) in tRNA. The polypeptide is tRNA (guanine-N(7)-)-methyltransferase (Mycoplasmopsis agalactiae (strain NCTC 10123 / CIP 59.7 / PG2) (Mycoplasma agalactiae)).